We begin with the raw amino-acid sequence, 367 residues long: 4-hydroxy-3-methylbut-2-en-1-yl diphosphate synthase (flavodoxin) (367 aa).

Residues cysteine 270, cysteine 273, cysteine 305, and glutamate 312 each contribute to the [4Fe-4S] cluster site.

This sequence belongs to the IspG family. It depends on [4Fe-4S] cluster as a cofactor.

It catalyses the reaction (2E)-4-hydroxy-3-methylbut-2-enyl diphosphate + oxidized [flavodoxin] + H2O + 2 H(+) = 2-C-methyl-D-erythritol 2,4-cyclic diphosphate + reduced [flavodoxin]. It participates in isoprenoid biosynthesis; isopentenyl diphosphate biosynthesis via DXP pathway; isopentenyl diphosphate from 1-deoxy-D-xylulose 5-phosphate: step 5/6. Functionally, converts 2C-methyl-D-erythritol 2,4-cyclodiphosphate (ME-2,4cPP) into 1-hydroxy-2-methyl-2-(E)-butenyl 4-diphosphate. The protein is 4-hydroxy-3-methylbut-2-en-1-yl diphosphate synthase (flavodoxin) of Pasteurella multocida (strain Pm70).